The chain runs to 448 residues: MSRLFGTDGVRGIANTELTAELAYNLGRAGAYVLTEGTHKPKILVAKDTRISGDMLEAALVAGILSVGAEALCLGVVPTPAVAHLTRAYGADAGVMISASHNPVEYNGIKFFDDKGYKLSDDLEDEIQRVIESGFENVPSPTGANLGREIIEKAALEDYISFAKDTIGISLEGLRVALDCANGASHEAAVRAFRELGAEIFVINDNPDGTNINENCGSTHPEELMEYVVKKKCHMGFAFDGDADRCLAVDEQGNLVDGDFILTICAKYLKELGRLKDDTLVVTVMSNLGLMIACKNEKINTAVTKVGDRYVLEEMLAKGYSLGGEQSGHIIFLDHNSTGDGLVTALQVASIVKRTGKSLFELKNVMKVLPQVLVNAKVPNNMKNIYEEDEEIIAEIKKMEAALDGCGRVLIRPSGTEPLVRVMLEGENQAEIDEMAHNLANMIEAKCN.

The Phosphoserine intermediate role is filled by Ser-100. Residues Ser-100, Asp-240, Asp-242, and Asp-244 each coordinate Mg(2+). Ser-100 carries the post-translational modification Phosphoserine.

Belongs to the phosphohexose mutase family. Mg(2+) serves as cofactor. Activated by phosphorylation.

The enzyme catalyses alpha-D-glucosamine 1-phosphate = D-glucosamine 6-phosphate. Catalyzes the conversion of glucosamine-6-phosphate to glucosamine-1-phosphate. This Clostridium perfringens (strain SM101 / Type A) protein is Phosphoglucosamine mutase.